The primary structure comprises 188 residues: Cytochrome b561 homolog 2 (188 aa).

Topologically, residues 1–15 are cytoplasmic; that stretch reads MSFTNTPERYGVISA. A helical transmembrane segment spans residues 16–36; that stretch reads AFHWLSAIIVYGMFALGLWMV. The heme b site is built by His-18 and His-52. Residues 37-54 are Periplasmic-facing; the sequence is TLSYYDGWYHKAPELHKS. The helical transmembrane segment at 55-75 threads the bilayer; that stretch reads IGILLMMGLVIRVLWRVISPP. Residues 76–91 are Cytoplasmic-facing; the sequence is PGPLPSYSPMTRLAAR. The chain crosses the membrane as a helical span at residues 92 to 112; the sequence is AGHLALYLLLFAIGISGYLIS. Over 113-143 the chain is Periplasmic; it reads TADGKPISVFGWFDVPATLADAGAQADFAGA. Residues 144–164 traverse the membrane as a helical segment; sequence LHFWLAWSVVVLSVMHGFMAL. Heme b is bound by residues His-145 and His-159. The Cytoplasmic portion of the chain corresponds to 165–188; that stretch reads KHHFIDKDDTLKRMLGKSSSDYGV.

The protein belongs to the cytochrome b561 family. Heme b serves as cofactor.

The protein localises to the cell inner membrane. The chain is Cytochrome b561 homolog 2 (yceJ) from Escherichia coli (strain K12).